The primary structure comprises 321 residues: LIMR family protein SELMODRAFT_432210 (321 aa).

A run of 5 helical transmembrane segments spans residues 28–48 (KQLW…VIPF), 116–133 (CFSL…LDLW), 139–159 (LCVF…FGGV), 240–260 (LVFG…ILVF), and 284–304 (LLGT…VISG).

This sequence belongs to the LIMR family.

Its subcellular location is the membrane. This Selaginella moellendorffii (Spikemoss) protein is LIMR family protein SELMODRAFT_432210.